A 252-amino-acid chain; its full sequence is Adenylate kinase (252 aa).

47–52 lines the ATP pocket; sequence GSGKGT. Positions 67–96 are NMP; the sequence is ATGDMLRSQVKQGTPLGLEAKKIMDQGGLV. AMP-binding positions include T68, R73, 94–96, 123–126, and Q130; these read GLV and GFPR. Positions 164-201 are LID; sequence GRLVHPASGRSYHKIFSPPKKEMTDDITGEPLVQRSDD. ATP is bound by residues R165 and 174-175; that span reads SY. AMP-binding residues include R198 and R209. Residue Q237 coordinates ATP.

The protein belongs to the adenylate kinase family. AK2 subfamily. Monomer.

It is found in the cytoplasm. Its subcellular location is the cytosol. The protein localises to the mitochondrion intermembrane space. The enzyme catalyses AMP + ATP = 2 ADP. In terms of biological role, catalyzes the reversible transfer of the terminal phosphate group between ATP and AMP. Plays an important role in cellular energy homeostasis and in adenine nucleotide metabolism. Adenylate kinase activity is critical for regulation of the phosphate utilization and the AMP de novo biosynthesis pathways. The protein is Adenylate kinase of Lodderomyces elongisporus (strain ATCC 11503 / CBS 2605 / JCM 1781 / NBRC 1676 / NRRL YB-4239) (Yeast).